The primary structure comprises 170 residues: Shikimate kinase (170 aa).

Position 11–16 (11–16 (LSGKST)) interacts with ATP. Serine 15 contacts Mg(2+). Aspartate 33, arginine 57, and glycine 79 together coordinate substrate. Residue arginine 119 participates in ATP binding. Residue arginine 137 participates in substrate binding.

It belongs to the shikimate kinase family. In terms of assembly, monomer. The cofactor is Mg(2+).

The protein resides in the cytoplasm. It catalyses the reaction shikimate + ATP = 3-phosphoshikimate + ADP + H(+). It participates in metabolic intermediate biosynthesis; chorismate biosynthesis; chorismate from D-erythrose 4-phosphate and phosphoenolpyruvate: step 5/7. Functionally, catalyzes the specific phosphorylation of the 3-hydroxyl group of shikimic acid using ATP as a cosubstrate. In Clostridium botulinum (strain Langeland / NCTC 10281 / Type F), this protein is Shikimate kinase.